Reading from the N-terminus, the 239-residue chain is Uridylate kinase (239 aa).

12 to 15 (KLSG) serves as a coordination point for ATP. A UMP-binding site is contributed by Gly-54. Residues Gly-55 and Arg-59 each contribute to the ATP site. UMP-binding positions include Asp-74 and 135–142 (TGNPYFTT). Positions 162, 168, and 171 each coordinate ATP.

The protein belongs to the UMP kinase family. Homohexamer.

It localises to the cytoplasm. The catalysed reaction is UMP + ATP = UDP + ADP. It functions in the pathway pyrimidine metabolism; CTP biosynthesis via de novo pathway; UDP from UMP (UMPK route): step 1/1. Inhibited by UTP. Functionally, catalyzes the reversible phosphorylation of UMP to UDP. This chain is Uridylate kinase, found in Fusobacterium nucleatum subsp. nucleatum (strain ATCC 25586 / DSM 15643 / BCRC 10681 / CIP 101130 / JCM 8532 / KCTC 2640 / LMG 13131 / VPI 4355).